Reading from the N-terminus, the 631-residue chain is DNA ligase (631 aa).

NAD(+) is bound by residues 37–41 (DAHYD) and 79–80 (ST). The active-site N6-AMP-lysine intermediate is the lysine 115. Arginine 131, glutamate 160, and lysine 272 together coordinate NAD(+). Positions 361, 364, 377, and 382 each coordinate Zn(2+). In terms of domain architecture, BRCT spans 539–630 (DVSSPISGKG…SQSSPEQMSL (92 aa)).

It belongs to the NAD-dependent DNA ligase family. LigA subfamily. Mg(2+) serves as cofactor. Requires Mn(2+) as cofactor.

The catalysed reaction is NAD(+) + (deoxyribonucleotide)n-3'-hydroxyl + 5'-phospho-(deoxyribonucleotide)m = (deoxyribonucleotide)n+m + AMP + beta-nicotinamide D-nucleotide.. In terms of biological role, DNA ligase that catalyzes the formation of phosphodiester linkages between 5'-phosphoryl and 3'-hydroxyl groups in double-stranded DNA using NAD as a coenzyme and as the energy source for the reaction. It is essential for DNA replication and repair of damaged DNA. In Desulfatibacillum aliphaticivorans, this protein is DNA ligase.